A 258-amino-acid chain; its full sequence is Ribosomal RNA small subunit methyltransferase A (258 aa).

S-adenosyl-L-methionine contacts are provided by N12, L14, G38, E59, D83, and N100.

The protein belongs to the class I-like SAM-binding methyltransferase superfamily. rRNA adenine N(6)-methyltransferase family. RsmA subfamily.

It is found in the cytoplasm. It catalyses the reaction adenosine(1518)/adenosine(1519) in 16S rRNA + 4 S-adenosyl-L-methionine = N(6)-dimethyladenosine(1518)/N(6)-dimethyladenosine(1519) in 16S rRNA + 4 S-adenosyl-L-homocysteine + 4 H(+). Its function is as follows. Specifically dimethylates two adjacent adenosines (A1518 and A1519) in the loop of a conserved hairpin near the 3'-end of 16S rRNA in the 30S particle. May play a critical role in biogenesis of 30S subunits. This Metamycoplasma arthritidis (strain 158L3-1) (Mycoplasma arthritidis) protein is Ribosomal RNA small subunit methyltransferase A.